Here is a 50-residue protein sequence, read N- to C-terminus: Large ribosomal subunit protein bL32c (50 aa).

It belongs to the bacterial ribosomal protein bL32 family.

Its subcellular location is the plastid. It localises to the chloroplast. This chain is Large ribosomal subunit protein bL32c, found in Lotus japonicus (Lotus corniculatus var. japonicus).